The chain runs to 245 residues: Phycocyanobilin:ferredoxin oxidoreductase (245 aa).

The protein belongs to the HY2 family.

It catalyses the reaction (2R,3Z)-phycocyanobilin + 4 oxidized [2Fe-2S]-[ferredoxin] = biliverdin IXalpha + 4 reduced [2Fe-2S]-[ferredoxin] + 4 H(+). Functionally, catalyzes the four-electron reduction of biliverdin IX-alpha (2-electron reduction at both the A and D rings); the reaction proceeds via an isolatable 2-electron intermediate, 181,182-dihydrobiliverdin. Upon overexpression in E.coli with PCB:ferredoxin oxidoreductase, CpeS and either CpcB or PecB permits synthesis of phycocyanin-coupled CpcB or PecB. The sequence is that of Phycocyanobilin:ferredoxin oxidoreductase (pcyA) from Nostoc sp. (strain PCC 7120 / SAG 25.82 / UTEX 2576).